The sequence spans 230 residues: Acyl-protein thioesterase 1 (230 aa).

Catalysis depends on charge relay system residues serine 119, aspartate 174, and histidine 208. Lysine 224 is subject to N6-acetyllysine.

This sequence belongs to the AB hydrolase superfamily. AB hydrolase 2 family. Homodimer. In terms of tissue distribution, ubiquitous. Detected at low levels in all tissues tested.

The protein resides in the cytoplasm. Its subcellular location is the cell membrane. It is found in the nucleus membrane. It localises to the endoplasmic reticulum. It catalyses the reaction S-hexadecanoyl-L-cysteinyl-[protein] + H2O = L-cysteinyl-[protein] + hexadecanoate + H(+). The catalysed reaction is 1-hexadecanoyl-sn-glycero-3-phosphocholine + H2O = sn-glycerol 3-phosphocholine + hexadecanoate + H(+). The enzyme catalyses a 1-(9Z-octadecenoyl)-2-acyl-sn-glycero-3-phosphocholine + H2O = a 2-acyl-sn-glycero-3-phosphocholine + (9Z)-octadecenoate + H(+). Acts as an acyl-protein thioesterase. Hydrolyzes fatty acids from S-acylated cysteine residues in proteins such as trimeric G alpha proteins or HRAS. Acts as a palmitoyl thioesterase that catalyzes depalmitoylation of proteins, such as ADRB2, KCNMA1 and SQSTM1. Acts as a negative regulator of autophagy by mediating palmitoylation of SQSTM1, decreasing affinity between SQSTM1 and ATG8 proteins and recruitment of ubiquitinated cargo proteins to autophagosomes. Acts as a lysophospholipase and hydrolyzes lysophosphatidylcholine (lyso-PC). Also hydrolyzes lysophosphatidylethanolamine (lyso-PE), lysophosphatidylinositol (lyso-PI) and lysophosphatidylserine (lyso-PS). Has much higher thioesterase activity than lysophospholipase activity. Contributes to the production of lysophosphatidic acid (LPA) during blood coagulation by recognizing and cleaving plasma phospholipids to generate lysophospholipids which in turn act as substrates for ENPP2 to produce LPA. The chain is Acyl-protein thioesterase 1 (Lypla1) from Rattus norvegicus (Rat).